A 317-amino-acid polypeptide reads, in one-letter code: Aspartate carbamoyltransferase catalytic subunit (317 aa).

The carbamoyl phosphate site is built by R65 and T66. K93 contributes to the L-aspartate binding site. R115, H145, and Q148 together coordinate carbamoyl phosphate. Residues R178 and R233 each coordinate L-aspartate. Carbamoyl phosphate is bound by residues G274 and P275.

The protein belongs to the aspartate/ornithine carbamoyltransferase superfamily. ATCase family. Heterododecamer (2C3:3R2) of six catalytic PyrB chains organized as two trimers (C3), and six regulatory PyrI chains organized as three dimers (R2).

It carries out the reaction carbamoyl phosphate + L-aspartate = N-carbamoyl-L-aspartate + phosphate + H(+). It functions in the pathway pyrimidine metabolism; UMP biosynthesis via de novo pathway; (S)-dihydroorotate from bicarbonate: step 2/3. In terms of biological role, catalyzes the condensation of carbamoyl phosphate and aspartate to form carbamoyl aspartate and inorganic phosphate, the committed step in the de novo pyrimidine nucleotide biosynthesis pathway. The chain is Aspartate carbamoyltransferase catalytic subunit from Methylobacillus flagellatus (strain ATCC 51484 / DSM 6875 / VKM B-1610 / KT).